The chain runs to 117 residues: MISIILVMIGGGFGAIARSAITDYFNHKFTSKLPIATLIVNLVGSFLIGLTIGLSISISWFPAFFVTGFLGGLTTFSTLAKELTLMMTPKFDINLFLNYSLLQFIIGFIACYIGYHI.

The next 2 helical transmembrane spans lie at 1–21 (MISIILVMIGGGFGAIARSAI) and 46–66 (FLIGLTIGLSISISWFPAFFV). Gly-71 and Thr-74 together coordinate Na(+). A helical transmembrane segment spans residues 95–115 (LFLNYSLLQFIIGFIACYIGY).

Belongs to the fluoride channel Fluc/FEX (TC 1.A.43) family.

It localises to the cell membrane. The enzyme catalyses fluoride(in) = fluoride(out). With respect to regulation, na(+) is not transported, but it plays an essential structural role and its presence is essential for fluoride channel function. Fluoride-specific ion channel. Important for reducing fluoride concentration in the cell, thus reducing its toxicity. This Staphylococcus aureus (strain Mu50 / ATCC 700699) protein is Fluoride-specific ion channel FluC 2.